The following is an 87-amino-acid chain: Small ribosomal subunit protein uS15c (87 aa).

This sequence belongs to the universal ribosomal protein uS15 family. Part of the 30S ribosomal subunit.

The protein resides in the plastid. The protein localises to the chloroplast. In Oenothera biennis (German evening primrose), this protein is Small ribosomal subunit protein uS15c (rps15).